The following is a 676-amino-acid chain: Ion-translocating oxidoreductase complex subunit C (676 aa).

2 consecutive 4Fe-4S ferredoxin-type domains span residues 369 to 397 (GEPQ…QQLY) and 407 to 436 (KATT…VQYF). Residues Cys-377, Cys-380, Cys-383, Cys-387, Cys-416, Cys-419, Cys-422, and Cys-426 each contribute to the [4Fe-4S] cluster site. Positions 600-652 (ARKLEQQQANAEPEQQVDPRKAAVEAAIARAKARKLEQQQANAEPEEQVDPRK) are disordered. Residues 605–615 (QQQANAEPEQQ) show a composition bias toward low complexity.

The protein belongs to the 4Fe4S bacterial-type ferredoxin family. RnfC subfamily. The complex is composed of six subunits: RsxA, RsxB, RsxC, RsxD, RsxE and RsxG. [4Fe-4S] cluster is required as a cofactor.

It is found in the cell inner membrane. Functionally, part of a membrane-bound complex that couples electron transfer with translocation of ions across the membrane. Required to maintain the reduced state of SoxR. The protein is Ion-translocating oxidoreductase complex subunit C of Escherichia coli (strain SMS-3-5 / SECEC).